A 329-amino-acid polypeptide reads, in one-letter code: BTB/POZ domain-containing adapter for CUL3-mediated RhoA degradation protein 1 (329 aa).

Residues 1-22 show a composition bias toward low complexity; sequence MSAEASGPAAAAAPSLEAPKPS. The disordered stretch occupies residues 1 to 31; the sequence is MSAEASGPAAAAAPSLEAPKPSGLEPGPAAY. A BTB domain is found at 41-109; it reads KYVKLNVGGS…LRDGSVPLPE (69 aa). Residues 282-303 are disordered; it reads ATGGAAGAGGAGRGEDEENREH.

The protein belongs to the BACURD family. As to quaternary structure, homotetramer; forms a two-fold symmetric tetramer in solution. Interacts with CUL3; interaction is direct and forms a 5:5 heterodecamer. Component of the BCR(KCTD13) E3 ubiquitin ligase complex, at least composed of CUL3, KCTD13/BACURD1 and RBX1. Interacts with RHOA; with a preference for RhoA-GDP. Interacts with POLD2 and PCNA. Interacts with SPRTN. Expressed in a wide variety of tissues.

It localises to the nucleus. It functions in the pathway protein modification; protein ubiquitination. In terms of biological role, substrate-specific adapter of a BCR (BTB-CUL3-RBX1) E3 ubiquitin-protein ligase complex required for synaptic transmission. The BCR(KCTD13) E3 ubiquitin ligase complex mediates the ubiquitination of RHOA, leading to its degradation by the proteasome Degradation of RHOA regulates the actin cytoskeleton and promotes synaptic transmission. The sequence is that of BTB/POZ domain-containing adapter for CUL3-mediated RhoA degradation protein 1 (KCTD13) from Homo sapiens (Human).